The primary structure comprises 159 residues: Probable NADH dehydrogenase [ubiquinone] 1 alpha subcomplex subunit 12 (159 aa).

It belongs to the complex I NDUFA12 subunit family. As to quaternary structure, complex I is composed of at least 49 different subunits.

The protein localises to the mitochondrion inner membrane. Accessory subunit of the mitochondrial membrane respiratory chain NADH dehydrogenase (Complex I), that is believed not to be involved in catalysis. Complex I functions in the transfer of electrons from NADH to the respiratory chain. The immediate electron acceptor for the enzyme is believed to be ubiquinone. In Arabidopsis thaliana (Mouse-ear cress), this protein is Probable NADH dehydrogenase [ubiquinone] 1 alpha subcomplex subunit 12.